The primary structure comprises 107 residues: uncharacterized protein (107 aa).

Transmembrane regions (helical) follow at residues 9–28 (FLVFISFFIILLGILDLIME), 33–50 (SYIIILVGLASLFASLNI), 55–72 (LAIAVCIAAAVFIEAIHV), and 77–99 (YRVILYAIGSLPLIISVGSYLKG).

It is found in the cell membrane. This is an uncharacterized protein from Archaeoglobus fulgidus (strain ATCC 49558 / DSM 4304 / JCM 9628 / NBRC 100126 / VC-16).